The sequence spans 348 residues: Small ribosomal subunit biogenesis GTPase RsgA (348 aa).

Over residues M1–I14 the composition is skewed to basic residues. The interval M1 to G39 is disordered. Residues K16 to Q31 show a composition bias toward basic and acidic residues. The CP-type G domain maps to F116–F275. Residues N163–D166 and G217–S225 each bind GTP. Zn(2+) contacts are provided by C299, C304, H306, and C312.

The protein belongs to the TRAFAC class YlqF/YawG GTPase family. RsgA subfamily. As to quaternary structure, monomer. Associates with 30S ribosomal subunit, binds 16S rRNA. Zn(2+) serves as cofactor.

Its subcellular location is the cytoplasm. In terms of biological role, one of several proteins that assist in the late maturation steps of the functional core of the 30S ribosomal subunit. Helps release RbfA from mature subunits. May play a role in the assembly of ribosomal proteins into the subunit. Circularly permuted GTPase that catalyzes slow GTP hydrolysis, GTPase activity is stimulated by the 30S ribosomal subunit. This is Small ribosomal subunit biogenesis GTPase RsgA from Hahella chejuensis (strain KCTC 2396).